The following is a 370-amino-acid chain: Glutamate 5-kinase (370 aa).

Residue lysine 17 participates in ATP binding. Residues serine 56, aspartate 143, and asparagine 155 each contribute to the substrate site. Residue 175-176 (SD) participates in ATP binding. In terms of domain architecture, PUA spans 280-357 (RGTIRVDAGA…AEIVAILGYS (78 aa)).

The protein belongs to the glutamate 5-kinase family.

The protein localises to the cytoplasm. The catalysed reaction is L-glutamate + ATP = L-glutamyl 5-phosphate + ADP. The protein operates within amino-acid biosynthesis; L-proline biosynthesis; L-glutamate 5-semialdehyde from L-glutamate: step 1/2. Its function is as follows. Catalyzes the transfer of a phosphate group to glutamate to form L-glutamate 5-phosphate. The chain is Glutamate 5-kinase from Cereibacter sphaeroides (strain ATCC 17023 / DSM 158 / JCM 6121 / CCUG 31486 / LMG 2827 / NBRC 12203 / NCIMB 8253 / ATH 2.4.1.) (Rhodobacter sphaeroides).